Here is a 162-residue protein sequence, read N- to C-terminus: Balbiani ring protein 2 (162 aa).

A last constant region region spans residues 1 to 31 (CDDAMRKTESDKCTNIGGKFDPSTCKCTPET). The tract at residues 32–51 (VTEGPTTCLESSESDEVTTK) is last Cys-1 repeat. Positions 52 to 162 (KPCDCTCAPD…VKGLEDILNS (111 aa)) are unique region.

In terms of tissue distribution, salivary gland.

Its subcellular location is the secreted. Used by the larvae to construct a supramolecular structure, the larval tube. This is Balbiani ring protein 2 (BR2) from Chironomus pallidivittatus (Midge).